The sequence spans 461 residues: Coagulation factor IX (461 aa).

The first 28 residues, 1-28 (MQRVNMIMAESPGLITICLLGYLLSAEC), serve as a signal peptide directing secretion. The propeptide occupies 29–46 (TVFLDHENANKILNRPKR). Tyr-47, Asn-48, Glu-53, Glu-54, Glu-61, Glu-63, Glu-66, Glu-67, Glu-72, Glu-73, and Glu-76 together coordinate Ca(2+). Residues 47 to 92 (YNSGKLEEFVQGNLERECMEEKCSFEEAREVFENTERTTEFWKQYV) form the Gla domain. 4-carboxyglutamate occurs at positions 53, 54, 61, 63, 66, 67, 72, 73, 76, 79, and 82. Glu-61 serves as a coordination point for Mg(2+). Cys-64 and Cys-69 are joined by a disulfide. Glu-66 contacts Mg(2+). Mg(2+) is bound at residue Glu-72. Glu-76 contacts Mg(2+). Glu-82 provides a ligand contact to Ca(2+). A Mg(2+)-binding site is contributed by Glu-82. Residue Thr-85 is glycosylated (O-linked (GalNAc...) threonine). Ca(2+) is bound by residues Glu-86, Asp-93, Gly-94, and Gln-96. Residue Glu-86 is modified to 4-carboxyglutamate. Mg(2+) is bound at residue Glu-86. One can recognise an EGF-like 1; calcium-binding domain in the interval 93–129 (DGDQCESNPCLNGGSCKDDINSYECWCPFGFEGKNCE). Cystine bridges form between Cys-97–Cys-108, Cys-102–Cys-117, Cys-119–Cys-128, Cys-134–Cys-145, Cys-141–Cys-155, Cys-157–Cys-170, Cys-178–Cys-335, Cys-252–Cys-268, Cys-382–Cys-396, and Cys-407–Cys-435. Ser-99 is a glycosylation site (O-linked (Glc...) serine). Ser-107 carries O-linked (Fuc...) serine glycosylation. Residues Asp-110 and Asp-111 each contribute to the Ca(2+) site. A (3R)-3-hydroxyaspartate modification is found at Asp-110. Position 114 is a phosphoserine (Ser-114). One can recognise an EGF-like 2 domain in the interval 130-171 (LDVTCNIKNGRCEQFCKNSADNKVVCSCTEGYRLAENQKSCE). The propeptide at 192 to 226 (AETVFPDVDYVNSTEAETILDNITQSTQSFNDFTR) is activation peptide. Position 201 is a sulfotyrosine (Tyr-201). Asn-203 carries an N-linked (GlcNAc...) asparagine glycan. Phosphoserine is present on Ser-204. The residue at position 205 (Thr-205) is a Phosphothreonine; alternate. The O-linked (GalNAc...) threonine; alternate glycan is linked to Thr-205. N-linked (GlcNAc...) asparagine glycosylation is present at Asn-213. 2 O-linked (GalNAc...) threonine glycosylation sites follow: Thr-215 and Thr-225. A Peptidase S1 domain is found at 227-459 (VVGGEDAKPG…YVNWIKEKTK (233 aa)). His-267 acts as the Charge relay system in catalysis. Positions 281, 283, 286, 288, and 291 each coordinate Ca(2+). Residue Asp-315 is the Charge relay system of the active site. Ser-411 serves as the catalytic Charge relay system.

It belongs to the peptidase S1 family. Heterodimer of a light chain and a heavy chain; disulfide-linked. Interacts (inactive and activated) with F11 (activated) in calcium-dependent manner. Interacts with SERPINC1. Interacts (activated) with iripin-8, a serine protease inhibitor from Ixodes ricinus saliva. Interacts (inactive and activated) with nitrophorin-2, an anticoagulant protein from Rhodnius prolixus. Post-translationally, activated by factor XIa, which excises the activation peptide. The propeptide can also be removed by snake venom protease. Activated by coagulation factor VIIa-tissue factor (F7-F3) complex in calcium-dependent manner. In terms of processing, the iron and 2-oxoglutarate dependent 3-hydroxylation of aspartate and asparagine is (R) stereospecific within EGF domains. In terms of tissue distribution, detected in blood plasma (at protein level). Synthesized primarily in the liver and secreted in plasma.

The protein resides in the secreted. It carries out the reaction Selective cleavage of Arg-|-Ile bond in factor X to form factor Xa.. Its function is as follows. Factor IX is a vitamin K-dependent plasma protein that participates in the intrinsic pathway of blood coagulation by converting factor X to its active form in the presence of Ca(2+) ions, phospholipids, and factor VIIIa. The polypeptide is Coagulation factor IX (F9) (Homo sapiens (Human)).